We begin with the raw amino-acid sequence, 199 residues long: Transcription regulator complex subunit bur6 (199 aa).

Positions proline 106–glutamate 199 are disordered. The segment covering arginine 112–arginine 121 has biased composition (basic residues). Polar residues predominate over residues serine 185–glutamate 199.

Belongs to the NC2 alpha/DRAP1 family.

It is found in the nucleus. Transcription regulator complex subunit that is essential for cell cycle progression. The polypeptide is Transcription regulator complex subunit bur6 (Schizosaccharomyces pombe (strain 972 / ATCC 24843) (Fission yeast)).